A 78-amino-acid chain; its full sequence is Apolipoprotein C-I (78 aa).

A signal peptide spans 1–26; the sequence is MRLILWLPVLVVVLLMVLEGPAPAQG.

It belongs to the apolipoprotein C1 family.

It localises to the secreted. Functionally, inhibitor of lipoprotein binding to the low density lipoprotein (LDL) receptor, LDL receptor-related protein, and very low density lipoprotein (VLDL) receptor. Associates with high density lipoproteins (HDL) and the triacylglycerol-rich lipoproteins in the plasma and makes up about 10% of the protein of the VLDL and 2% of that of HDL. Appears to interfere directly with fatty acid uptake and is also the major plasma inhibitor of cholesteryl ester transfer protein (CETP). Binds free fatty acids and reduces their intracellular esterification. Modulates the interaction of APOE with beta-migrating VLDL and inhibits binding of beta-VLDL to the LDL receptor-related protein. This Puma concolor (Mountain lion) protein is Apolipoprotein C-I (APOC1).